The sequence spans 234 residues: 3-dehydroquinate dehydratase (234 aa).

3-dehydroquinate-binding positions include 33 to 35 (EWR) and Arg68. His124 (proton donor/acceptor) is an active-site residue. The active-site Schiff-base intermediate with substrate is Lys151. The 3-dehydroquinate site is built by Arg193, Ser214, and Gln218.

The protein belongs to the type-I 3-dehydroquinase family. Homodimer.

The enzyme catalyses 3-dehydroquinate = 3-dehydroshikimate + H2O. The protein operates within metabolic intermediate biosynthesis; chorismate biosynthesis; chorismate from D-erythrose 4-phosphate and phosphoenolpyruvate: step 3/7. In terms of biological role, involved in the third step of the chorismate pathway, which leads to the biosynthesis of aromatic amino acids. Catalyzes the cis-dehydration of 3-dehydroquinate (DHQ) and introduces the first double bond of the aromatic ring to yield 3-dehydroshikimate. The chain is 3-dehydroquinate dehydratase from Syntrophobacter fumaroxidans (strain DSM 10017 / MPOB).